The sequence spans 804 residues: Phenylalanine--tRNA ligase beta subunit (804 aa).

Residues 40 to 161 (FSMIDYLIIG…KANLGDTEVY (122 aa)) form the tRNA-binding domain. In terms of domain architecture, B5 spans 413–486 (EYHQQVKVNY…KILNINLFQP (74 aa)). Mg(2+)-binding residues include D464, D470, E473, and E474. The region spanning 710–804 (DHYQEVTRDI…DLMKTKQILI (95 aa)) is the FDX-ACB domain.

The protein belongs to the phenylalanyl-tRNA synthetase beta subunit family. Type 1 subfamily. Tetramer of two alpha and two beta subunits. Requires Mg(2+) as cofactor.

It localises to the cytoplasm. The enzyme catalyses tRNA(Phe) + L-phenylalanine + ATP = L-phenylalanyl-tRNA(Phe) + AMP + diphosphate + H(+). The polypeptide is Phenylalanine--tRNA ligase beta subunit (Mycoplasmoides gallisepticum (strain R(low / passage 15 / clone 2)) (Mycoplasma gallisepticum)).